The chain runs to 137 residues: uncharacterized protein (137 aa).

The segment at 1-26 (MKDKMWCEDTAQPHRRLPAPPSSSSP) is disordered.

This is an uncharacterized protein from Homo sapiens (Human).